The sequence spans 279 residues: MNTLRTVALMTVLTLLLVWAGGMMGGRGGALFALIMAAVMNLGSYWFSDKIVIAMYRGREVSSGPLFSVVQELCLRNALPMPKVYILPQATPNAFATGRNPKHAAVAATEGILQVLSREELMGVMAHEMSHVRHRDILIGSIAATIAGAISYLAHMAQWAALFGGFGGRDDDDGNPLGLLLLIIFAPLAAMLVQMAISRSREYAADRGGAALCGNPHYLANALRKLEMANSRQPMPKVNEATAHMFIVNPLRGGGLKSLFSTHPPVDERIRRLENMTVL.

The next 2 helical transmembrane spans lie at 6 to 26 and 28 to 48; these read TVAL…MMGG and GGAL…YWFS. Histidine 127 is a binding site for Zn(2+). Residue glutamate 128 is part of the active site. Position 131 (histidine 131) interacts with Zn(2+). Transmembrane regions (helical) follow at residues 137 to 157 and 177 to 197; these read ILIG…AHMA and LGLL…QMAI. A Zn(2+)-binding site is contributed by glutamate 202.

This sequence belongs to the peptidase M48B family. Zn(2+) serves as cofactor.

The protein resides in the cell inner membrane. The sequence is that of Protease HtpX homolog from Syntrophotalea carbinolica (strain DSM 2380 / NBRC 103641 / GraBd1) (Pelobacter carbinolicus).